The sequence spans 428 residues: Probable glucose-6-phosphate isomerase (428 aa).

Residue E269 is the Proton donor of the active site. Residues H290 and K401 contribute to the active site.

The protein belongs to the GPI family.

Its subcellular location is the cytoplasm. It catalyses the reaction alpha-D-glucose 6-phosphate = beta-D-fructose 6-phosphate. The protein operates within carbohydrate biosynthesis; gluconeogenesis. It functions in the pathway carbohydrate degradation; glycolysis; D-glyceraldehyde 3-phosphate and glycerone phosphate from D-glucose: step 2/4. Functionally, catalyzes the reversible isomerization of glucose-6-phosphate to fructose-6-phosphate. In Natronomonas pharaonis (strain ATCC 35678 / DSM 2160 / CIP 103997 / JCM 8858 / NBRC 14720 / NCIMB 2260 / Gabara) (Halobacterium pharaonis), this protein is Probable glucose-6-phosphate isomerase.